The chain runs to 103 residues: Putative septation protein SpoVG (103 aa).

It belongs to the SpoVG family.

Its function is as follows. Could be involved in septation. The chain is Putative septation protein SpoVG from Exiguobacterium sibiricum (strain DSM 17290 / CCUG 55495 / CIP 109462 / JCM 13490 / 255-15).